We begin with the raw amino-acid sequence, 166 residues long: Peptide deformylase (166 aa).

Fe cation contacts are provided by C88 and H130. The active site involves E131. Fe cation is bound at residue H134.

Belongs to the polypeptide deformylase family. Requires Fe(2+) as cofactor.

The catalysed reaction is N-terminal N-formyl-L-methionyl-[peptide] + H2O = N-terminal L-methionyl-[peptide] + formate. Functionally, removes the formyl group from the N-terminal Met of newly synthesized proteins. Requires at least a dipeptide for an efficient rate of reaction. N-terminal L-methionine is a prerequisite for activity but the enzyme has broad specificity at other positions. The chain is Peptide deformylase from Thermoanaerobacter sp. (strain X514).